We begin with the raw amino-acid sequence, 342 residues long: Phosphate acyltransferase (342 aa).

This sequence belongs to the PlsX family. Homodimer. Probably interacts with PlsY.

It localises to the cytoplasm. It catalyses the reaction a fatty acyl-[ACP] + phosphate = an acyl phosphate + holo-[ACP]. The protein operates within lipid metabolism; phospholipid metabolism. Catalyzes the reversible formation of acyl-phosphate (acyl-PO(4)) from acyl-[acyl-carrier-protein] (acyl-ACP). This enzyme utilizes acyl-ACP as fatty acyl donor, but not acyl-CoA. The protein is Phosphate acyltransferase of Shewanella woodyi (strain ATCC 51908 / MS32).